The sequence spans 397 residues: Arginine biosynthesis bifunctional protein ArgJ (397 aa).

Substrate contacts are provided by threonine 143, lysine 169, threonine 180, glutamate 266, asparagine 392, and threonine 397. The active-site Nucleophile is the threonine 180.

The protein belongs to the ArgJ family. Heterotetramer of two alpha and two beta chains.

It localises to the cytoplasm. The enzyme catalyses N(2)-acetyl-L-ornithine + L-glutamate = N-acetyl-L-glutamate + L-ornithine. It carries out the reaction L-glutamate + acetyl-CoA = N-acetyl-L-glutamate + CoA + H(+). It functions in the pathway amino-acid biosynthesis; L-arginine biosynthesis; L-ornithine and N-acetyl-L-glutamate from L-glutamate and N(2)-acetyl-L-ornithine (cyclic): step 1/1. Its pathway is amino-acid biosynthesis; L-arginine biosynthesis; N(2)-acetyl-L-ornithine from L-glutamate: step 1/4. Its activity is regulated as follows. Competitively inhibited by L-ornithine. Its function is as follows. Catalyzes two activities which are involved in the cyclic version of arginine biosynthesis: the synthesis of N-acetylglutamate from glutamate and acetyl-CoA as the acetyl donor, and of ornithine by transacetylation between N(2)-acetylornithine and glutamate. This chain is Arginine biosynthesis bifunctional protein ArgJ, found in Thermotoga neapolitana (strain ATCC 49049 / DSM 4359 / NBRC 107923 / NS-E).